The sequence spans 493 residues: Lysine--tRNA ligase (493 aa).

2 residues coordinate Mg(2+): Glu402 and Glu409.

It belongs to the class-II aminoacyl-tRNA synthetase family. As to quaternary structure, homodimer. Requires Mg(2+) as cofactor.

The protein resides in the cytoplasm. The catalysed reaction is tRNA(Lys) + L-lysine + ATP = L-lysyl-tRNA(Lys) + AMP + diphosphate. The sequence is that of Lysine--tRNA ligase from Ureaplasma urealyticum serovar 10 (strain ATCC 33699 / Western).